Consider the following 376-residue polypeptide: ATP phosphoribosyltransferase regulatory subunit (376 aa).

Belongs to the class-II aminoacyl-tRNA synthetase family. HisZ subfamily. Heteromultimer composed of HisG and HisZ subunits.

It localises to the cytoplasm. The protein operates within amino-acid biosynthesis; L-histidine biosynthesis; L-histidine from 5-phospho-alpha-D-ribose 1-diphosphate: step 1/9. Required for the first step of histidine biosynthesis. May allow the feedback regulation of ATP phosphoribosyltransferase activity by histidine. In Brucella anthropi (strain ATCC 49188 / DSM 6882 / CCUG 24695 / JCM 21032 / LMG 3331 / NBRC 15819 / NCTC 12168 / Alc 37) (Ochrobactrum anthropi), this protein is ATP phosphoribosyltransferase regulatory subunit.